The sequence spans 216 residues: Transmembrane emp24 domain-containing protein eca (216 aa).

The first 20 residues, 1-20 (MRNQFICVALLLCALNSACG), serve as a signal peptide directing secretion. The Lumenal segment spans residues 21-183 (LYFHISETER…RHTSESTNSR (163 aa)). The GOLD domain maps to 30–126 (RKCFIEEVPD…QLRVHLDIQV (97 aa)). A coiled-coil region spans residues 134–164 (ANVAQKEKLTELQLRIRQLLDQVDQITKEQN). A helical transmembrane segment spans residues 184–203 (VLWWSLAQTVVLVCMGFWQM). At 204 to 216 (RHLKSFFEAKKLV) the chain is on the cytoplasmic side. The short motif at 213 to 216 (KKLV) is the Prevents secretion from ER element.

Belongs to the EMP24/GP25L family.

The protein localises to the endoplasmic reticulum membrane. Eca and bai are essential, though not redundant, for dorsoventral patterning of the embryo. Specifically required during early embryogenesis for the activity of maternal tkv, while the zygotic tkv is not affected. Involved in Golgi organization. The polypeptide is Transmembrane emp24 domain-containing protein eca (Drosophila willistoni (Fruit fly)).